The sequence spans 418 residues: 26S proteasome regulatory subunit 6B (418 aa).

Methionine 1 bears the N-acetylmethionine mark. At serine 21 the chain carries Phosphoserine. Residue threonine 25 is modified to Phosphothreonine. Serine 28 bears the Phosphoserine mark. 206-213 (GPPGCGKT) contributes to the ATP binding site. 2 positions are modified to N6-acetyllysine: lysine 397 and lysine 401.

It belongs to the AAA ATPase family. Component of the 19S proteasome regulatory particle complex. The 26S proteasome consists of a 20S core particle (CP) and two 19S regulatory subunits (RP). The regulatory particle is made of a lid composed of 9 subunits, a base containing 6 ATPases including PSMC4 and few additional components. Interacts with NR1I3. Interacts with PAAF1. Interacts with TRIM5. Interacts with ZFAND1.

It localises to the cytoplasm. The protein resides in the nucleus. In terms of biological role, component of the 26S proteasome, a multiprotein complex involved in the ATP-dependent degradation of ubiquitinated proteins. This complex plays a key role in the maintenance of protein homeostasis by removing misfolded or damaged proteins, which could impair cellular functions, and by removing proteins whose functions are no longer required. Therefore, the proteasome participates in numerous cellular processes, including cell cycle progression, apoptosis, or DNA damage repair. PSMC4 belongs to the heterohexameric ring of AAA (ATPases associated with diverse cellular activities) proteins that unfolds ubiquitinated target proteins that are concurrently translocated into a proteolytic chamber and degraded into peptides. In Bos taurus (Bovine), this protein is 26S proteasome regulatory subunit 6B (PSMC4).